Here is a 253-residue protein sequence, read N- to C-terminus: Molybdate import ATP-binding protein MolC (253 aa).

The region spanning L5–M229 is the ABC transporter domain. G38 to S45 contributes to the ATP binding site.

The protein belongs to the ABC transporter superfamily. As to quaternary structure, the complex is composed of two ATP-binding proteins (MolC), two transmembrane proteins (MolB) and a solute-binding protein (MolA).

Its subcellular location is the cell inner membrane. The enzyme catalyses molybdate(out) + ATP + H2O = molybdate(in) + ADP + phosphate + H(+). With respect to regulation, the MolBCA complex shows a decrease in affinity in the presence of increasing concentrations of substrate and nucleotide. Functionally, part of the ABC transporter complex MolBCA involved in molybdate import. Responsible for energy coupling to the transport system. Functions as a low-affinity molybdate transporter. In Haemophilus influenzae (strain ATCC 51907 / DSM 11121 / KW20 / Rd), this protein is Molybdate import ATP-binding protein MolC.